The primary structure comprises 418 residues: Gamma-glutamyl phosphate reductase (418 aa).

Belongs to the gamma-glutamyl phosphate reductase family.

The protein resides in the cytoplasm. It catalyses the reaction L-glutamate 5-semialdehyde + phosphate + NADP(+) = L-glutamyl 5-phosphate + NADPH + H(+). Its pathway is amino-acid biosynthesis; L-proline biosynthesis; L-glutamate 5-semialdehyde from L-glutamate: step 2/2. In terms of biological role, catalyzes the NADPH-dependent reduction of L-glutamate 5-phosphate into L-glutamate 5-semialdehyde and phosphate. The product spontaneously undergoes cyclization to form 1-pyrroline-5-carboxylate. This is Gamma-glutamyl phosphate reductase from Histophilus somni (strain 2336) (Haemophilus somnus).